A 263-amino-acid chain; its full sequence is Tryptophan synthase alpha chain (263 aa).

Residues Glu-49 and Asp-60 each act as proton acceptor in the active site.

Belongs to the TrpA family. As to quaternary structure, tetramer of two alpha and two beta chains.

It catalyses the reaction (1S,2R)-1-C-(indol-3-yl)glycerol 3-phosphate + L-serine = D-glyceraldehyde 3-phosphate + L-tryptophan + H2O. The protein operates within amino-acid biosynthesis; L-tryptophan biosynthesis; L-tryptophan from chorismate: step 5/5. In terms of biological role, the alpha subunit is responsible for the aldol cleavage of indoleglycerol phosphate to indole and glyceraldehyde 3-phosphate. The sequence is that of Tryptophan synthase alpha chain from Clostridium kluyveri (strain NBRC 12016).